The primary structure comprises 425 residues: CinA-like protein (425 aa).

This sequence belongs to the CinA family.

The polypeptide is CinA-like protein (Trichodesmium erythraeum (strain IMS101)).